We begin with the raw amino-acid sequence, 41 residues long: Cytochrome b559 subunit beta (41 aa).

Residues 16–32 traverse the membrane as a helical segment; it reads WLAVHALAVPTVFFLGA. Position 20 (His-20) interacts with heme.

It belongs to the PsbE/PsbF family. Heterodimer of an alpha subunit and a beta subunit. PSII is composed of 1 copy each of membrane proteins PsbA, PsbB, PsbC, PsbD, PsbE, PsbF, PsbH, PsbI, PsbJ, PsbK, PsbL, PsbM, PsbT, PsbX, PsbY, PsbZ, Psb30/Ycf12, at least 3 peripheral proteins of the oxygen-evolving complex and a large number of cofactors. It forms dimeric complexes. Requires heme b as cofactor.

The protein localises to the plastid. The protein resides in the chloroplast thylakoid membrane. This b-type cytochrome is tightly associated with the reaction center of photosystem II (PSII). PSII is a light-driven water:plastoquinone oxidoreductase that uses light energy to abstract electrons from H(2)O, generating O(2) and a proton gradient subsequently used for ATP formation. It consists of a core antenna complex that captures photons, and an electron transfer chain that converts photonic excitation into a charge separation. The protein is Cytochrome b559 subunit beta of Chlorella vulgaris (Green alga).